Reading from the N-terminus, the 364-residue chain is Probable cysteine protease RDL4 (364 aa).

The signal sequence occupies residues 1–23 (MGSAKSAMLILLVAMVIASCATA). The propeptide at 24-136 (IDMSVVSYDD…DRYKTSADDV (113 aa)) is activation peptide. Residue Asn-87 is glycosylated (N-linked (GlcNAc...) asparagine). 3 disulfides stabilise this stretch: Cys-158–Cys-199, Cys-192–Cys-232, and Cys-291–Cys-342. Cys-161 is a catalytic residue. Catalysis depends on residues His-297 and Asn-317.

Belongs to the peptidase C1 family. In terms of tissue distribution, expressed in inflorescences.

Probable thiol protease. This chain is Probable cysteine protease RDL4, found in Arabidopsis thaliana (Mouse-ear cress).